Reading from the N-terminus, the 490-residue chain is GTPase Der (490 aa).

EngA-type G domains lie at 3–166 and 200–373; these read PVVA…AEAM and IKLA…DSAT. Residues 9–16, 56–60, 118–121, 206–213, 253–257, and 318–321 contribute to the GTP site; these read GRPNVGKS, DTGGI, NKVD, GKPNVGKS, DTAGV, and NKWD. The KH-like domain occupies 374-458; sequence RRVSTSMLTR…PIQLRFQEGG (85 aa).

It belongs to the TRAFAC class TrmE-Era-EngA-EngB-Septin-like GTPase superfamily. EngA (Der) GTPase family. As to quaternary structure, associates with the 50S ribosomal subunit.

Its function is as follows. GTPase that plays an essential role in the late steps of ribosome biogenesis. This chain is GTPase Der, found in Shewanella halifaxensis (strain HAW-EB4).